A 453-amino-acid chain; its full sequence is GTPase Der (453 aa).

EngA-type G domains are found at residues 3–167 (PIIV…INSK) and 188–361 (VKIA…HTSQ). GTP is bound by residues 9–16 (GRTNVGKS), 57–61 (DTAGI), 119–122 (NKID), 194–201 (GKPNVGKS), 241–245 (DTAGM), and 306–309 (NKCD). A KH-like domain is found at 362-446 (KKIKTSQVMK…PIKIQFKETM (85 aa)).

The protein belongs to the TRAFAC class TrmE-Era-EngA-EngB-Septin-like GTPase superfamily. EngA (Der) GTPase family. Associates with the 50S ribosomal subunit.

In terms of biological role, GTPase that plays an essential role in the late steps of ribosome biogenesis. The chain is GTPase Der from Buchnera aphidicola subsp. Schizaphis graminum (strain Sg).